A 314-amino-acid polypeptide reads, in one-letter code: 4-hydroxy-3-methylbut-2-enyl diphosphate reductase (314 aa).

Cys-12 serves as a coordination point for [4Fe-4S] cluster. Positions 41 and 74 each coordinate (2E)-4-hydroxy-3-methylbut-2-enyl diphosphate. The dimethylallyl diphosphate site is built by His-41 and His-74. 2 residues coordinate isopentenyl diphosphate: His-41 and His-74. Cys-96 is a binding site for [4Fe-4S] cluster. Residue His-124 participates in (2E)-4-hydroxy-3-methylbut-2-enyl diphosphate binding. Residue His-124 coordinates dimethylallyl diphosphate. His-124 is an isopentenyl diphosphate binding site. Catalysis depends on Glu-126, which acts as the Proton donor. (2E)-4-hydroxy-3-methylbut-2-enyl diphosphate is bound at residue Thr-167. Cys-197 is a [4Fe-4S] cluster binding site. Residues Ser-225, Ser-226, Asn-227, and Ser-269 each contribute to the (2E)-4-hydroxy-3-methylbut-2-enyl diphosphate site. Ser-225, Ser-226, Asn-227, and Ser-269 together coordinate dimethylallyl diphosphate. Ser-225, Ser-226, Asn-227, and Ser-269 together coordinate isopentenyl diphosphate.

It belongs to the IspH family. The cofactor is [4Fe-4S] cluster.

The catalysed reaction is isopentenyl diphosphate + 2 oxidized [2Fe-2S]-[ferredoxin] + H2O = (2E)-4-hydroxy-3-methylbut-2-enyl diphosphate + 2 reduced [2Fe-2S]-[ferredoxin] + 2 H(+). The enzyme catalyses dimethylallyl diphosphate + 2 oxidized [2Fe-2S]-[ferredoxin] + H2O = (2E)-4-hydroxy-3-methylbut-2-enyl diphosphate + 2 reduced [2Fe-2S]-[ferredoxin] + 2 H(+). It participates in isoprenoid biosynthesis; dimethylallyl diphosphate biosynthesis; dimethylallyl diphosphate from (2E)-4-hydroxy-3-methylbutenyl diphosphate: step 1/1. The protein operates within isoprenoid biosynthesis; isopentenyl diphosphate biosynthesis via DXP pathway; isopentenyl diphosphate from 1-deoxy-D-xylulose 5-phosphate: step 6/6. Functionally, catalyzes the conversion of 1-hydroxy-2-methyl-2-(E)-butenyl 4-diphosphate (HMBPP) into a mixture of isopentenyl diphosphate (IPP) and dimethylallyl diphosphate (DMAPP). Acts in the terminal step of the DOXP/MEP pathway for isoprenoid precursor biosynthesis. This Pseudoalteromonas atlantica (strain T6c / ATCC BAA-1087) protein is 4-hydroxy-3-methylbut-2-enyl diphosphate reductase.